We begin with the raw amino-acid sequence, 258 residues long: UPF0246 protein Bpro_3713 (258 aa).

This sequence belongs to the UPF0246 family.

In Polaromonas sp. (strain JS666 / ATCC BAA-500), this protein is UPF0246 protein Bpro_3713.